The sequence spans 614 residues: Dihydroxy-acid dehydratase (614 aa).

A Mg(2+)-binding site is contributed by Asp-81. Cys-122 contributes to the [2Fe-2S] cluster binding site. Mg(2+) contacts are provided by Asp-123 and Lys-124. Lys-124 carries the post-translational modification N6-carboxylysine. Residue Cys-196 participates in [2Fe-2S] cluster binding. A Mg(2+)-binding site is contributed by Glu-492. The active-site Proton acceptor is the Ser-518.

This sequence belongs to the IlvD/Edd family. In terms of assembly, homodimer. [2Fe-2S] cluster serves as cofactor. The cofactor is Mg(2+).

The catalysed reaction is (2R)-2,3-dihydroxy-3-methylbutanoate = 3-methyl-2-oxobutanoate + H2O. It carries out the reaction (2R,3R)-2,3-dihydroxy-3-methylpentanoate = (S)-3-methyl-2-oxopentanoate + H2O. The protein operates within amino-acid biosynthesis; L-isoleucine biosynthesis; L-isoleucine from 2-oxobutanoate: step 3/4. It participates in amino-acid biosynthesis; L-valine biosynthesis; L-valine from pyruvate: step 3/4. Its function is as follows. Functions in the biosynthesis of branched-chain amino acids. Catalyzes the dehydration of (2R,3R)-2,3-dihydroxy-3-methylpentanoate (2,3-dihydroxy-3-methylvalerate) into 2-oxo-3-methylpentanoate (2-oxo-3-methylvalerate) and of (2R)-2,3-dihydroxy-3-methylbutanoate (2,3-dihydroxyisovalerate) into 2-oxo-3-methylbutanoate (2-oxoisovalerate), the penultimate precursor to L-isoleucine and L-valine, respectively. This is Dihydroxy-acid dehydratase from Ruegeria sp. (strain TM1040) (Silicibacter sp.).